Here is a 229-residue protein sequence, read N- to C-terminus: Large ribosomal subunit protein uL1 (229 aa).

This sequence belongs to the universal ribosomal protein uL1 family. As to quaternary structure, part of the 50S ribosomal subunit.

Binds directly to 23S rRNA. The L1 stalk is quite mobile in the ribosome, and is involved in E site tRNA release. Its function is as follows. Protein L1 is also a translational repressor protein, it controls the translation of the L11 operon by binding to its mRNA. This Leifsonia xyli subsp. xyli (strain CTCB07) protein is Large ribosomal subunit protein uL1.